Reading from the N-terminus, the 253-residue chain is 5'/3'-nucleotidase SurE (253 aa).

A divalent metal cation-binding residues include Asp8, Asp9, Ser39, and Asn92.

Belongs to the SurE nucleotidase family. The cofactor is a divalent metal cation.

The protein resides in the cytoplasm. It carries out the reaction a ribonucleoside 5'-phosphate + H2O = a ribonucleoside + phosphate. It catalyses the reaction a ribonucleoside 3'-phosphate + H2O = a ribonucleoside + phosphate. The enzyme catalyses [phosphate](n) + H2O = [phosphate](n-1) + phosphate + H(+). Functionally, nucleotidase with a broad substrate specificity as it can dephosphorylate various ribo- and deoxyribonucleoside 5'-monophosphates and ribonucleoside 3'-monophosphates with highest affinity to 3'-AMP. Also hydrolyzes polyphosphate (exopolyphosphatase activity) with the preference for short-chain-length substrates (P20-25). Might be involved in the regulation of dNTP and NTP pools, and in the turnover of 3'-mononucleotides produced by numerous intracellular RNases (T1, T2, and F) during the degradation of various RNAs. In Salmonella paratyphi A (strain AKU_12601), this protein is 5'/3'-nucleotidase SurE.